A 627-amino-acid polypeptide reads, in one-letter code: Pheromone B alpha 2 receptor (627 aa).

Residues 1-7 (MLDPTYP) are Extracellular-facing. A helical transmembrane segment spans residues 8 to 28 (AFPIFAFLGIVCCLVPLPWHL). Residues 29–35 (QSWNSGT) lie on the Cytoplasmic side of the membrane. A helical transmembrane segment spans residues 36 to 56 (CFLMIWTAVACLNMFVNSIIW). At 57 to 69 (KDHAQNVAPVWCE) the chain is on the extracellular side. A helical transmembrane segment spans residues 70 to 90 (ISIRITLGASVGIPASSLCIV). At 91-102 (RRLYSIAKKFRA) the chain is on the cytoplasmic side. A helical transmembrane segment spans residues 103-123 (VMVDALICVLFPILYIILQIV). At 124-150 (VQGHRFNILENIGCFPAIINTPLTYPL) the chain is on the extracellular side. Residues 151–171 (TFMWPVLIGVISFIYSTLALI) form a helical membrane-spanning segment. Over 172 to 197 (QFNRHRLQFTQFLHSNSTLSVSRYLR) the chain is Cytoplasmic. Residues 198–218 (LMALAMTEMMCTTPMGVFVII) form a helical membrane-spanning segment. Residues 219–260 (LNAKATPVSPYVSWAVTHYGYGRIDQVPAIIWRSNRLLVASY) are Extracellular-facing. The helical transmembrane segment at 261–281 (ELTRWSSPAIALIFFFYFGFA) threads the bilayer. At 282 to 627 (QEARRNYAAA…ASPRTHRASV (346 aa)) the chain is on the cytoplasmic side. 3 disordered regions span residues 363 to 405 (LPRP…SSPI), 479 to 505 (TVPQ…SSSA), and 518 to 627 (LPST…RASV). Residues 372 to 387 (SSSGFSSSDSTRFGSS) are compositionally biased toward low complexity. Composition is skewed to polar residues over residues 519-533 (PSTT…SLPT) and 545-555 (SLSQLFGISSM). The segment covering 569 to 607 (ATGTASPTTTAPAPASTTIAPASATMAPATTTTAPTTIA) has biased composition (low complexity).

Belongs to the G-protein coupled receptor 4 family.

It localises to the cell membrane. Functionally, receptor for the BAP2 pheromone, a prenylated mating factor. The receptor/pheromone interaction may have a role in the fusion of clamp cells. The chain is Pheromone B alpha 2 receptor (BAR2) from Schizophyllum commune (Split gill fungus).